We begin with the raw amino-acid sequence, 82 residues long: Penaeidin-3i (82 aa).

Positions Met-1–Gly-19 are cleaved as a signal peptide. Position 20 is a pyrrolidone carboxylic acid (Gln-20). 2 disulfide bridges follow: Cys-55–Cys-73 and Cys-67–Cys-74. At Ser-81 the chain carries Serine amide.

It belongs to the penaeidin family.

The protein localises to the cytoplasmic granule. Its function is as follows. Antibacterial and antifungal activity. Presents chitin-binding activity. In Penaeus vannamei (Whiteleg shrimp), this protein is Penaeidin-3i.